A 186-amino-acid chain; its full sequence is Transcriptional repressor NrdR (186 aa).

A zinc finger lies at 3-34; sequence CPFCRHPDSRVVDSREAEEGAAIRRRRSCPAC. One can recognise an ATP-cone domain in the interval 46-136; the sequence is LRVRKRSGAT…VYLAFESLGD (91 aa). Positions 149–169 are disordered; it reads AGGGEPPVAGKPTTMPAATGA.

Belongs to the NrdR family. Zn(2+) serves as cofactor.

Functionally, negatively regulates transcription of bacterial ribonucleotide reductase nrd genes and operons by binding to NrdR-boxes. The polypeptide is Transcriptional repressor NrdR (Parafrankia sp. (strain EAN1pec)).